Reading from the N-terminus, the 169-residue chain is MIVLHARDCDPKACTALRAHRMGLVELTRHPGDVPTGAVVLDPTVEKALSREDRDAALERGLVAVDCSWEHVHRYFGPLRRRCRHRILPYLIAANPVNYGKPCKLSTVEALAAALYILGFRREAEEFISRFKWGPAFLELNRERLEAYRRAETSAEVVRVQEEFLPDGL.

Residues T15, V65, L88, and T107 each coordinate S-adenosyl-L-methionine.

This sequence belongs to the TDD superfamily. TSR3 family.

It is found in the cytoplasm. The enzyme catalyses an N(1)-methylpseudouridine in rRNA + S-adenosyl-L-methionine = N(1)-methyl-N(3)-[(3S)-3-amino-3-carboxypropyl]pseudouridine in rRNA + S-methyl-5'-thioadenosine + H(+). Functionally, aminocarboxypropyltransferase that catalyzes the aminocarboxypropyl transfer on pseudouridine corresponding to position 914 in M.jannaschii 16S rRNA. It constitutes the last step in biosynthesis of the hypermodified N1-methyl-N3-(3-amino-3-carboxypropyl) pseudouridine (m1acp3-Psi). This chain is 16S rRNA aminocarboxypropyltransferase, found in Methanopyrus kandleri (strain AV19 / DSM 6324 / JCM 9639 / NBRC 100938).